A 228-amino-acid chain; its full sequence is MSPSLTWHDVIGQEKEQPYFKDTLAYVAAERRAGKTIYPPQKDIFNAFRLTELDQVKVVILGQDPYHGPNQAHGLSFSVLPGVPAPPSLGNIYKELVTDIPGFQRPNHGFLQSWAEQGVLLLNTVLTVEAGKAHSHANLGWETFTDRVIAALNEHREGVIFMLWGSHAQKKGRIINTERHYILKAPHPSPLSAHRGFLGCKHFSQANQLLQQQNQQPIDWQPKLPAVE.

The active-site Proton acceptor is Asp-64.

The protein belongs to the uracil-DNA glycosylase (UDG) superfamily. UNG family.

The protein localises to the cytoplasm. The enzyme catalyses Hydrolyzes single-stranded DNA or mismatched double-stranded DNA and polynucleotides, releasing free uracil.. Functionally, excises uracil residues from the DNA which can arise as a result of misincorporation of dUMP residues by DNA polymerase or due to deamination of cytosine. The protein is Uracil-DNA glycosylase of Yersinia pseudotuberculosis serotype IB (strain PB1/+).